The primary structure comprises 295 residues: Bifunctional protein FolD (295 aa).

Residues 166–168 (GRS), Ser-191, and Ile-232 each bind NADP(+).

It belongs to the tetrahydrofolate dehydrogenase/cyclohydrolase family. As to quaternary structure, homodimer.

The catalysed reaction is (6R)-5,10-methylene-5,6,7,8-tetrahydrofolate + NADP(+) = (6R)-5,10-methenyltetrahydrofolate + NADPH. It catalyses the reaction (6R)-5,10-methenyltetrahydrofolate + H2O = (6R)-10-formyltetrahydrofolate + H(+). It functions in the pathway one-carbon metabolism; tetrahydrofolate interconversion. Its function is as follows. Catalyzes the oxidation of 5,10-methylenetetrahydrofolate to 5,10-methenyltetrahydrofolate and then the hydrolysis of 5,10-methenyltetrahydrofolate to 10-formyltetrahydrofolate. The sequence is that of Bifunctional protein FolD from Rhodopseudomonas palustris (strain HaA2).